We begin with the raw amino-acid sequence, 310 residues long: Zinc finger protein unc-98 (310 aa).

A compositionally biased stretch (polar residues) spans 73 to 84; it reads GSSSAQTPTKSS. Positions 73–102 are disordered; that stretch reads GSSSAQTPTKSSGGALDGSDQQEVRQDGTS. C2H2-type zinc fingers lie at residues 113-135 and 141-163; these read YKCR…ERIH and YVCG…AAQH. A C2H2-type 3; degenerate zinc finger spans residues 169–188; sequence YKCECGRTFFSYTEMLYHKH. The interaction with myo-3 stretch occupies residues 198-310; the sequence is APETTTIKVS…RTSGYVTPRF (113 aa). The C2H2-type 4 zinc finger occupies 246 to 268; sequence YICEYCSKSYSDSRGLAYHMYSH.

Interacts with hum-6, mep-1, myo-3, unc-96 and unc-97/PINCH. Expressed in embryos from 1.5- to 2-fold stage in myofibrils. In larvae and adults, it is expressed in body wall muscle, and in addition, anal depressor muscle and vulval muscles. More specifically it is found in the thick filaments of muscle fibers.

The protein resides in the nucleus. It localises to the cytoplasm. Its function is as follows. Probable transcription factor required for muscle structure. Its dual subcellular localization suggests that it may function both as a muscle adhesion complex protein and as a transcription factor, or work together with transcription factors, to influence gene expression. Thought to act as a molecular bridge between unc-97 and myo-3 at the M-line of muscles, possibly in a signaling role. Plays a role in the formation of muscle connections, also called muscle arm extensions, between the body wall and the motor axons in the dorsal and ventral cord. In Caenorhabditis elegans, this protein is Zinc finger protein unc-98 (unc-98).